The sequence spans 54 residues: EVKQESLSGITEGEAKEFHKIFTSSILVFFGVAAFAHLLVWIWRPWVPGPNGYS.

Residues 1-20 lie on the Cytoplasmic side of the membrane; sequence EVKQESLSGITEGEAKEFHK. 2 residues coordinate a bacteriochlorophyll: histidine 19 and histidine 37. A helical transmembrane segment spans residues 21 to 43; sequence IFTSSILVFFGVAAFAHLLVWIW. Residues 44 to 54 lie on the Periplasmic side of the membrane; sequence RPWVPGPNGYS.

The protein belongs to the antenna complex beta subunit family. In terms of assembly, the core complex is formed by different alpha and beta chains, binding bacteriochlorophyll molecules, and arranged most probably in tetrameric structures disposed around the reaction center. The non-pigmented gamma chains may constitute additional components.

It is found in the cell inner membrane. Antenna complexes are light-harvesting systems, which transfer the excitation energy to the reaction centers. The chain is Light-harvesting protein B-870 beta chain from Rhodospirillum rubrum.